Reading from the N-terminus, the 115-residue chain is Secapin (115 aa).

The signal sequence occupies residues 1-24 (MRFQVYILHLCFFILVVLTYLSQG). The propeptide occupies 25-90 (QSYTTTTTTS…STENFDITNR (66 aa)). Cys-99 and Cys-110 are disulfide-bonded.

The protein belongs to the secapin family. Expressed in the epidermis, fat body and venom gland.

Its subcellular location is the secreted. Functionally, serine protease inhibitor which exhibits antifibrinolytic, antielastolytic and antimicrobial activities. Displays antimicrobial activity against bacteria and fungi. Likely functions in the innate immune response to microbial infection and possibly in the venom, as an antifibrinolytic agent. The recombinant form inhibits trypsin (IC(50)=80.02 nM, Ki=127.25 nM), chymotrypsin (IC(50)=393.78 nM, Ki=432.59 nM), the microbial serine proteases subtilisin A (IC(50)=379.20 nM, Ki=492.77 nM) and proteinase K (IC(50)=189.43 nM, Ki=271.76 nM), plasmin (IC(50)=457.98 nM, Ki=502.91 nM), human elastase (IC(50)=347.81 nM, Ki=469.90 nM) and porcine elastase (IC(50)=94.70 nM, Ki=125.62 nM). Does not inhibit thrombin. Binds to human plasmin and inhibits the plasmin-mediated degradation of fibrin to fibrin degradation products, indicating its role as an anti-fibrinolytic agent. Also binds to bacterial and fungal surfaces. Exhibits antimicrobial activity against the Gram-positive bacteria B.thuringiensis (MIC=4.21 uM) and P.larvae (MIC=11.13 uM), the Gram-negative bacteria E.coli (MIC=6.50 uM) and the multidrug-resistant A.baumannii (MIC=5 ug/ml, MBC=10 ug/ml), as well as against the fungus B.bassiana (IC(50)=2.57 uM). The synthetic peptide also exhibits antimicrobial activity against the Gram-positive bacterium P.larvae (MIC=41.12 uM), the Gram-negative bacterium P.aeruginosa (MIC=65.75 uM), and the fungus B.bassiana (IC(50)=44.27 uM). Is also able to prevent A.baumannii biofilm formation and eliminate established A.baumannii biofilms. In vitro, does not induce an inflammatory response and has no cytotoxic activity against mammalian cells. This is Secapin from Apis cerana (Indian honeybee).